A 60-amino-acid polypeptide reads, in one-letter code: Photosystem II reaction center protein L (60 aa).

The helical transmembrane segment at 39-59 (SLYWGLLLIFVLAVLFSSYIF) threads the bilayer.

It belongs to the PsbL family. As to quaternary structure, PSII is composed of 1 copy each of membrane proteins PsbA, PsbB, PsbC, PsbD, PsbE, PsbF, PsbH, PsbI, PsbJ, PsbK, PsbL, PsbM, PsbT, PsbX, PsbY, PsbZ, Psb30/Ycf12, at least 3 peripheral proteins of the oxygen-evolving complex and a large number of cofactors. It forms dimeric complexes.

It is found in the plastid. The protein resides in the chloroplast thylakoid membrane. Functionally, one of the components of the core complex of photosystem II (PSII). PSII is a light-driven water:plastoquinone oxidoreductase that uses light energy to abstract electrons from H(2)O, generating O(2) and a proton gradient subsequently used for ATP formation. It consists of a core antenna complex that captures photons, and an electron transfer chain that converts photonic excitation into a charge separation. This subunit is found at the monomer-monomer interface and is required for correct PSII assembly and/or dimerization. This Oedogonium cardiacum (Filamentous green alga) protein is Photosystem II reaction center protein L.